The following is a 195-amino-acid chain: Pyruvoyl-dependent arginine decarboxylase AaxB (195 aa).

A Pyruvic acid (Ser) modification is found at S53.

The protein belongs to the pyruvoyl-dependent arginine decarboxylase family. Trimer of an alpha-beta dimer. The cofactor is pyruvate.

The protein resides in the cytoplasm. The catalysed reaction is L-arginine + H(+) = agmatine + CO2. Its activity is regulated as follows. Inhibited by argininamide. Its function is as follows. Part of the AaxABC system, catalyzes the decarboxylation of L-arginine. The arginine uptake by the bacterium in the macrophage may be a virulence factor against the host innate immune response. The chain is Pyruvoyl-dependent arginine decarboxylase AaxB (aaxB) from Chlamydia pneumoniae (Chlamydophila pneumoniae).